A 157-amino-acid polypeptide reads, in one-letter code: Ribosome maturation factor RimP (157 aa).

The protein belongs to the RimP family.

Its subcellular location is the cytoplasm. Its function is as follows. Required for maturation of 30S ribosomal subunits. The polypeptide is Ribosome maturation factor RimP (Ligilactobacillus salivarius (strain UCC118) (Lactobacillus salivarius)).